Consider the following 158-residue polypeptide: Cyclic pyranopterin monophosphate synthase (158 aa).

Residues 75–77 (LCH) and 113–114 (ME) contribute to the substrate site. D128 is an active-site residue.

It belongs to the MoaC family. In terms of assembly, homohexamer; trimer of dimers.

The catalysed reaction is (8S)-3',8-cyclo-7,8-dihydroguanosine 5'-triphosphate = cyclic pyranopterin phosphate + diphosphate. It functions in the pathway cofactor biosynthesis; molybdopterin biosynthesis. In terms of biological role, catalyzes the conversion of (8S)-3',8-cyclo-7,8-dihydroguanosine 5'-triphosphate to cyclic pyranopterin monophosphate (cPMP). This Polynucleobacter asymbioticus (strain DSM 18221 / CIP 109841 / QLW-P1DMWA-1) (Polynucleobacter necessarius subsp. asymbioticus) protein is Cyclic pyranopterin monophosphate synthase.